Reading from the N-terminus, the 341-residue chain is Platelet-activating factor receptor (341 aa).

The Extracellular segment spans residues 1 to 16 (MEHNGSFRVDSEFRYT). The N-linked (GlcNAc...) asparagine glycan is linked to N4. Residues 17–38 (LFPIVYSVIFILGVVANGYVLW) traverse the membrane as a helical segment. The Cytoplasmic portion of the chain corresponds to 39-54 (VFANLYPSKKLNEIKI). A helical membrane pass occupies residues 55–74 (FMVNLTMADLLFLITLPLWI). At 75–91 (VYYYNEGDWILPNFLCN) the chain is on the extracellular side. A disulfide bridge connects residues C90 and C173. The chain crosses the membrane as a helical span at residues 92 to 113 (VAGCLFFINTYCSVAFLGVITY). Residues 114-133 (NRYQAVAYPIKTAQATTRKR) lie on the Cytoplasmic side of the membrane. A helical membrane pass occupies residues 134–155 (GISLSLIIWVSIVATASYFLAT). At 156–184 (DSTNLVPNKDGSGNITRCFEHYEPYSVPI) the chain is on the extracellular side. N-linked (GlcNAc...) asparagine glycosylation occurs at N169. A helical transmembrane segment spans residues 185–205 (LVVHVFIAFCFFLVFFLIFYC). Residues 206 to 233 (NLVIIHTLLTQPMRQQRKAGVKRRALWM) are Cytoplasmic-facing. A helical transmembrane segment spans residues 234-254 (VCTVLAVFIICFVPHHVVQLP). Topologically, residues 255 to 275 (WTLAELGYQTNFHQAINDAHQ) are extracellular. Residues 276-295 (ITLCLLSTNCVLDPVIYCFL) traverse the membrane as a helical segment. The Cytoplasmic segment spans residues 296-341 (TKKFRKHLSEKFYSMRSSRKCSRATSDTCTEVIVPANQTPIVSLKN).

The protein belongs to the G-protein coupled receptor 1 family. Interacts with ARRB1. In terms of tissue distribution, found in a range of organs. Expressed most strongly in spleen, followed by skeletal muscle, lung and small intestine. Expressed at moderate levels in the heart. Expressed at relatively low levels in the brain, liver and kidney.

It is found in the cell membrane. Receptor for platelet activating factor, a chemotactic phospholipid mediator that possesses potent inflammatory, smooth-muscle contractile and hypotensive activity. Seems to mediate its action via a G protein that activates a phosphatidylinositol-calcium second messenger system. This chain is Platelet-activating factor receptor (Ptafr), found in Mus musculus (Mouse).